Here is a 102-residue protein sequence, read N- to C-terminus: Small ribosomal subunit protein uS10 (102 aa).

Belongs to the universal ribosomal protein uS10 family. Part of the 30S ribosomal subunit.

In terms of biological role, involved in the binding of tRNA to the ribosomes. The protein is Small ribosomal subunit protein uS10 of Pelagibacter ubique (strain HTCC1062).